Consider the following 410-residue polypeptide: FAS1 domain-containing protein CaO19.3004 (410 aa).

A signal peptide spans 1 to 18; the sequence is MKLSKLLQLAVFSSLVTS. 2 stretches are compositionally biased toward basic and acidic residues: residues 64 to 73 and 83 to 96; these read NAKFKRDPKN and GSAE…REPK. The tract at residues 64–98 is disordered; the sequence is NAKFKRDPKNVIDPASLKEGSAEEEQKDKREPKNL. An FAS1 domain is found at 247-407; that stretch reads NNLLQSILPQ…GFVLIINDSL (161 aa).

Its subcellular location is the vacuole. This is FAS1 domain-containing protein CaO19.3004 from Candida albicans (strain SC5314 / ATCC MYA-2876) (Yeast).